The sequence spans 199 residues: UPF0301 protein Vapar_4617 (199 aa).

Belongs to the UPF0301 (AlgH) family.

This is UPF0301 protein Vapar_4617 from Variovorax paradoxus (strain S110).